The chain runs to 265 residues: 4-hydroxy-tetrahydrodipicolinate reductase (265 aa).

NAD(+) contacts are provided by residues 7-12 (GASGRM) and Asp33. Arg34 contributes to the NADP(+) binding site. Residues 96 to 98 (GTT) and 120 to 123 (AANM) contribute to the NAD(+) site. His153 (proton donor/acceptor) is an active-site residue. His154 serves as a coordination point for (S)-2,3,4,5-tetrahydrodipicolinate. Lys157 acts as the Proton donor in catalysis. A (S)-2,3,4,5-tetrahydrodipicolinate-binding site is contributed by 163-164 (GT).

This sequence belongs to the DapB family.

Its subcellular location is the cytoplasm. It catalyses the reaction (S)-2,3,4,5-tetrahydrodipicolinate + NAD(+) + H2O = (2S,4S)-4-hydroxy-2,3,4,5-tetrahydrodipicolinate + NADH + H(+). The enzyme catalyses (S)-2,3,4,5-tetrahydrodipicolinate + NADP(+) + H2O = (2S,4S)-4-hydroxy-2,3,4,5-tetrahydrodipicolinate + NADPH + H(+). The protein operates within amino-acid biosynthesis; L-lysine biosynthesis via DAP pathway; (S)-tetrahydrodipicolinate from L-aspartate: step 4/4. Catalyzes the conversion of 4-hydroxy-tetrahydrodipicolinate (HTPA) to tetrahydrodipicolinate. The chain is 4-hydroxy-tetrahydrodipicolinate reductase from Burkholderia cenocepacia (strain ATCC BAA-245 / DSM 16553 / LMG 16656 / NCTC 13227 / J2315 / CF5610) (Burkholderia cepacia (strain J2315)).